A 129-amino-acid chain; its full sequence is Tumor necrosis factor receptor superfamily member 12A (129 aa).

Positions 1-27 (MARGSLRRLLRLLVLGLWLALLRSVAG) are cleaved as a signal peptide. Residues 28 to 80 (EQAPGTAPCSRGSSWSADLDKCMDCASCRARPHSDFCLGCAAAPPAPFRLLWP) lie on the Extracellular side of the membrane. Intrachain disulfides connect C36-C49, C52-C67, and C55-C64. One copy of the TNFR-Cys; atypical repeat lies at 36-67 (CSRGSSWSADLDKCMDCASCRARPHSDFCLGC). Residues 81 to 101 (ILGGALSLTFVLGLLSGFLVW) form a helical membrane-spanning segment. At 102–129 (RRCRRREKFTTPIEETGGEGCPAVALIQ) the chain is on the cytoplasmic side.

In terms of assembly, associates with TRAF1 and TRAF2, and probably also with TRAF3. As to expression, highly expressed in heart, placenta and kidney. Intermediate expression in lung, skeletal muscle and pancreas.

The protein resides in the membrane. Its function is as follows. Receptor for TNFSF12/TWEAK. Weak inducer of apoptosis in some cell types. Promotes angiogenesis and the proliferation of endothelial cells. May modulate cellular adhesion to matrix proteins. The polypeptide is Tumor necrosis factor receptor superfamily member 12A (TNFRSF12A) (Homo sapiens (Human)).